Reading from the N-terminus, the 526-residue chain is Outer capsid protein VP5 (526 aa).

The interval methionine 1 to glutamate 42 is involved in membrane permeabilization.

It belongs to the orbivirus VP5 family.

The protein resides in the virion. Its function is as follows. VP5 protein is one of the two proteins (with VP2) which constitute the virus particle outer capsid. Acts as a membrane permeabilization protein that mediates release of viral particles from endosomal compartments into the cytoplasm. Permeabilization activity is probably negatively regulated by VP2 and is triggered by endosomal degradation of VP2 and exposure to low pH. This is Outer capsid protein VP5 (Segment-6) from Bluetongue virus 1 (isolate South Africa) (BTV 1).